Here is a 233-residue protein sequence, read N- to C-terminus: UPF0502 protein YpsIP31758_2048 (233 aa).

The protein belongs to the UPF0502 family.

This Yersinia pseudotuberculosis serotype O:1b (strain IP 31758) protein is UPF0502 protein YpsIP31758_2048.